We begin with the raw amino-acid sequence, 235 residues long: Segregation and condensation protein A (235 aa).

This sequence belongs to the ScpA family. In terms of assembly, component of a cohesin-like complex composed of ScpA, ScpB and the Smc homodimer, in which ScpA and ScpB bind to the head domain of Smc. The presence of the three proteins is required for the association of the complex with DNA.

It localises to the cytoplasm. In terms of biological role, participates in chromosomal partition during cell division. May act via the formation of a condensin-like complex containing Smc and ScpB that pull DNA away from mid-cell into both cell halves. In Streptococcus uberis (strain ATCC BAA-854 / 0140J), this protein is Segregation and condensation protein A.